Consider the following 154-residue polypeptide: Putative pre-16S rRNA nuclease (154 aa).

This sequence belongs to the YqgF nuclease family.

It is found in the cytoplasm. Functionally, could be a nuclease involved in processing of the 5'-end of pre-16S rRNA. The sequence is that of Putative pre-16S rRNA nuclease from Rickettsia canadensis (strain McKiel).